We begin with the raw amino-acid sequence, 179 residues long: Gamma-crystallin S (179 aa).

Ser2 is subject to N-acetylserine. The segment at 2-5 is N-terminal arm; that stretch reads SKTG. Beta/gamma crystallin 'Greek key' domains are found at residues 6–44 and 45–87; these read TKIT…RVEG and GTWA…RALH. The interval 88-93 is connecting peptide; sequence LSSGGQ. Beta/gamma crystallin 'Greek key' domains follow at residues 94–134 and 135–177; these read YKIQ…KVLD and GAWI…RRIV.

It belongs to the beta/gamma-crystallin family. As to quaternary structure, monomer.

Functionally, crystallins are the dominant structural components of the vertebrate eye lens. This chain is Gamma-crystallin S (CRYGS), found in Oryctolagus cuniculus (Rabbit).